Consider the following 188-residue polypeptide: Protein GrpE (188 aa).

Positions Met1–Gln16 are enriched in basic and acidic residues. The segment at Met1–Glu31 is disordered.

Belongs to the GrpE family. As to quaternary structure, homodimer.

The protein localises to the cytoplasm. Its function is as follows. Participates actively in the response to hyperosmotic and heat shock by preventing the aggregation of stress-denatured proteins, in association with DnaK and GrpE. It is the nucleotide exchange factor for DnaK and may function as a thermosensor. Unfolded proteins bind initially to DnaJ; upon interaction with the DnaJ-bound protein, DnaK hydrolyzes its bound ATP, resulting in the formation of a stable complex. GrpE releases ADP from DnaK; ATP binding to DnaK triggers the release of the substrate protein, thus completing the reaction cycle. Several rounds of ATP-dependent interactions between DnaJ, DnaK and GrpE are required for fully efficient folding. This is Protein GrpE from Bacillus cereus (strain G9842).